Here is a 156-residue protein sequence, read N- to C-terminus: Ribonuclease pancreatic (156 aa).

The N-terminal stretch at 1–26 (MGLEKSLVFFPLLVLLALGWVQPCLG) is a signal peptide. The substrate site is built by K33 and R36. The active-site Proton acceptor is the H38. Intrachain disulfides connect C54/C112, C68/C123, C86/C138, and C93/C100. A substrate-binding site is contributed by 69–73 (KPVNT). N90 carries an N-linked (GlcNAc...) asparagine glycan. Substrate contacts are provided by K94 and R113. Catalysis depends on H147, which acts as the Proton donor.

It belongs to the pancreatic ribonuclease family. As to quaternary structure, monomer. Interacts with and forms tight 1:1 complexes with RNH1. Dimerization of two such complexes may occur. Interaction with RNH1 inhibits this protein. As to expression, pancreas.

It localises to the secreted. It carries out the reaction an [RNA] containing cytidine + H2O = an [RNA]-3'-cytidine-3'-phosphate + a 5'-hydroxy-ribonucleotide-3'-[RNA].. It catalyses the reaction an [RNA] containing uridine + H2O = an [RNA]-3'-uridine-3'-phosphate + a 5'-hydroxy-ribonucleotide-3'-[RNA].. Endonuclease that catalyzes the cleavage of RNA on the 3' side of pyrimidine nucleotides. Acts on single-stranded and double-stranded RNA. The chain is Ribonuclease pancreatic (RNASE1) from Glis glis (Fat dormouse).